A 209-amino-acid chain; its full sequence is Na(+)-translocating NADH-quinone reductase subunit D (209 aa).

5 consecutive transmembrane segments (helical) span residues 42–62 (LVMT…ISLI), 72–92 (IIVQ…ILQA), 103–123 (VFVG…AYAM), 131–151 (FMDG…VGFL), and 178–198 (NGLF…IWGL).

This sequence belongs to the NqrDE/RnfAE family. In terms of assembly, composed of six subunits; NqrA, NqrB, NqrC, NqrD, NqrE and NqrF.

The protein localises to the cell inner membrane. The catalysed reaction is a ubiquinone + n Na(+)(in) + NADH + H(+) = a ubiquinol + n Na(+)(out) + NAD(+). In terms of biological role, NQR complex catalyzes the reduction of ubiquinone-1 to ubiquinol by two successive reactions, coupled with the transport of Na(+) ions from the cytoplasm to the periplasm. NqrA to NqrE are probably involved in the second step, the conversion of ubisemiquinone to ubiquinol. The protein is Na(+)-translocating NADH-quinone reductase subunit D of Photorhabdus laumondii subsp. laumondii (strain DSM 15139 / CIP 105565 / TT01) (Photorhabdus luminescens subsp. laumondii).